The chain runs to 835 residues: Serine/threonine-protein kinase TNNI3K (835 aa).

A lipid anchor (N-myristoyl glycine) is attached at G2. A coiled-coil region spans residues 21–50; the sequence is SESYAIIIERLEDNLQIKENEFQELRHIFG. ANK repeat units follow at residues 66-96, 100-129, 133-162, 166-195, 199-228, 234-263, 269-298, 304-335, 339-368, and 381-410; these read RGLS…RPSR, NGFP…DVQQ, GGLT…NVNV, VFFT…DVNV, VGDR…KADV, EDHV…EVQP, YGDT…TESL, FSET…NINH, DGHT…DMNL, and DEQT…PQEE. The Protein kinase domain occupies 463–723; the sequence is IEFHEIIGSG…EVVSKLEECL (261 aa). ATP contacts are provided by residues 469–477 and K490; that span reads IGSGSFGKV. Residue D588 is the Proton acceptor of the active site.

It belongs to the protein kinase superfamily. TKL Ser/Thr protein kinase family. MAP kinase kinase kinase subfamily. As to quaternary structure, interacts with TNNI3, ACTC, ACTA1, MYBPC3, AIP, FABP3 and HADHB. Mg(2+) is required as a cofactor. Post-translationally, autophosphorylated.

It localises to the nucleus. It is found in the cytoplasm. It carries out the reaction L-seryl-[protein] + ATP = O-phospho-L-seryl-[protein] + ADP + H(+). The enzyme catalyses L-threonyl-[protein] + ATP = O-phospho-L-threonyl-[protein] + ADP + H(+). May play a role in cardiac physiology. The protein is Serine/threonine-protein kinase TNNI3K of Rattus norvegicus (Rat).